The sequence spans 235 residues: Large ribosomal subunit protein uL1 (235 aa).

The protein belongs to the universal ribosomal protein uL1 family. As to quaternary structure, part of the 50S ribosomal subunit.

In terms of biological role, binds directly to 23S rRNA. The L1 stalk is quite mobile in the ribosome, and is involved in E site tRNA release. Protein L1 is also a translational repressor protein, it controls the translation of the L11 operon by binding to its mRNA. The polypeptide is Large ribosomal subunit protein uL1 (Lawsonia intracellularis (strain PHE/MN1-00)).